The primary structure comprises 633 residues: Probable alkaline/neutral invertase A, chloroplastic (633 aa).

The N-terminal 71 residues, 1 to 71 (MNAITFLGNS…TNAVPFCTDR (71 aa)), are a transit peptide targeting the chloroplast. Serine 623 bears the Phosphoserine mark.

The protein belongs to the glycosyl hydrolase 100 family. Expressed in flowers.

It is found in the plastid. The protein localises to the chloroplast. It carries out the reaction Hydrolysis of terminal non-reducing beta-D-fructofuranoside residues in beta-D-fructofuranosides.. Chloroplastic invertase that cleaves sucrose into glucose and fructose and may participate in the carbon flux between the cytosol and plastids in leaves. This is Probable alkaline/neutral invertase A, chloroplastic from Arabidopsis thaliana (Mouse-ear cress).